The sequence spans 583 residues: Aspartate--tRNA ligase (583 aa).

Glu174 is an L-aspartate binding site. The tract at residues 198–201 (QITK) is aspartate. Position 220 (Arg220) interacts with L-aspartate. ATP is bound by residues 220–222 (RDE) and Gln229. Residue His443 coordinates L-aspartate. Residue Glu477 coordinates ATP. Arg484 lines the L-aspartate pocket. Residue 529–532 (GLDR) participates in ATP binding.

It belongs to the class-II aminoacyl-tRNA synthetase family. Type 1 subfamily. As to quaternary structure, homodimer.

Its subcellular location is the cytoplasm. The catalysed reaction is tRNA(Asp) + L-aspartate + ATP = L-aspartyl-tRNA(Asp) + AMP + diphosphate. Catalyzes the attachment of L-aspartate to tRNA(Asp) in a two-step reaction: L-aspartate is first activated by ATP to form Asp-AMP and then transferred to the acceptor end of tRNA(Asp). In Streptococcus thermophilus (strain CNRZ 1066), this protein is Aspartate--tRNA ligase.